Reading from the N-terminus, the 444-residue chain is CBL-interacting serine/threonine-protein kinase 1 (444 aa).

Positions 20–275 constitute a Protein kinase domain; that stretch reads YELGRTLGEG…VVGIKASEWF (256 aa). ATP-binding positions include 26–34 and K49; that span reads LGEGNFGKV. D143 acts as the Proton acceptor in catalysis. The tract at residues 161–190 is activation loop; that stretch reads DFGLSALPQHFRDDGLLHTTCGSPNYVAPE. S165 bears the Phosphoserine mark. T179 carries the phosphothreonine modification. An NAF domain is found at 313–337; it reads DSPTIINAFQLIGMSSFLDLSGFFE. The tract at residues 343-372 is PPI; that stretch reads ERRIRFTSNSSAKDLLEKIETAVTEMGFSV.

This sequence belongs to the protein kinase superfamily. CAMK Ser/Thr protein kinase family. SNF1 subfamily. As to quaternary structure, interacts with CBL1. Interacts with CBL2. Interacts with CBL3. Interacts with CBL9. Interacts with ECT1 and ECT2. Mn(2+) is required as a cofactor. In terms of processing, autophosphorylated. In terms of tissue distribution, ubiquitous.

The enzyme catalyses L-seryl-[protein] + ATP = O-phospho-L-seryl-[protein] + ADP + H(+). The catalysed reaction is L-threonyl-[protein] + ATP = O-phospho-L-threonyl-[protein] + ADP + H(+). CIPK serine-threonine protein kinases interact with CBL proteins. Binding of a CBL protein to the regulatory NAF domain of CIPK protein lead to the activation of the kinase in a calcium-dependent manner. In Arabidopsis thaliana (Mouse-ear cress), this protein is CBL-interacting serine/threonine-protein kinase 1 (CIPK1).